The following is a 444-amino-acid chain: Na(+)-translocating NADH-quinone reductase subunit A (444 aa).

The protein belongs to the NqrA family. As to quaternary structure, composed of six subunits; NqrA, NqrB, NqrC, NqrD, NqrE and NqrF.

The catalysed reaction is a ubiquinone + n Na(+)(in) + NADH + H(+) = a ubiquinol + n Na(+)(out) + NAD(+). Its function is as follows. NQR complex catalyzes the reduction of ubiquinone-1 to ubiquinol by two successive reactions, coupled with the transport of Na(+) ions from the cytoplasm to the periplasm. NqrA to NqrE are probably involved in the second step, the conversion of ubisemiquinone to ubiquinol. This chain is Na(+)-translocating NADH-quinone reductase subunit A, found in Shewanella denitrificans (strain OS217 / ATCC BAA-1090 / DSM 15013).